Here is a 365-residue protein sequence, read N- to C-terminus: DNA replication and repair protein RecF (365 aa).

An ATP-binding site is contributed by 30 to 37 (GLNGSGKT).

This sequence belongs to the RecF family.

The protein localises to the cytoplasm. Functionally, the RecF protein is involved in DNA metabolism; it is required for DNA replication and normal SOS inducibility. RecF binds preferentially to single-stranded, linear DNA. It also seems to bind ATP. The polypeptide is DNA replication and repair protein RecF (Cellvibrio japonicus (strain Ueda107) (Pseudomonas fluorescens subsp. cellulosa)).